The primary structure comprises 488 residues: UDP-GalNAc:beta-1,3-N-acetylgalactosaminyltransferase 2 (488 aa).

At 1 to 2 (MR) the chain is on the cytoplasmic side. A helical; Signal-anchor for type II membrane protein membrane pass occupies residues 3–23 (HLLLLFLCPCAIGVAFHLWLF). N-linked (GlcNAc...) asparagine glycosylation is found at N24, N105, and N162. Residues 24–488 (NFSGLFTWFP…CGNPCACEDR (465 aa)) are Lumenal-facing.

It belongs to the glycosyltransferase 31 family.

It localises to the golgi apparatus membrane. The protein localises to the endoplasmic reticulum. It carries out the reaction 3-O-(N-acetyl-beta-D-glucosaminyl-(1-&gt;4)-alpha-D-mannosyl)-L-threonyl-[protein] + UDP-N-acetyl-alpha-D-galactosamine = 3-O-[beta-D-GalNAc-(1-&gt;3)-beta-D-GlcNAc-(1-&gt;4)-alpha-D-Man]-L-Thr-[protein] + UDP + H(+). The protein operates within protein modification; protein glycosylation. Its function is as follows. Beta-1,3-N-acetylgalactosaminyltransferase that synthesizes a unique carbohydrate structure, GalNAc-beta-1-3GlcNAc, on N- and O-glycans. Has no galactose nor galactosaminyl transferase activity toward any acceptor substrate. Involved in alpha-dystroglycan (dag1) glycosylation. In Xenopus tropicalis (Western clawed frog), this protein is UDP-GalNAc:beta-1,3-N-acetylgalactosaminyltransferase 2 (b3galnt2).